The following is a 263-amino-acid chain: Undecaprenyl-diphosphatase (263 aa).

8 helical membrane passes run Met1–Ile21, Phe41–Tyr61, Trp69–Val89, Leu96–Trp116, Ala147–Leu167, Phe177–Ile197, Leu208–Ile228, and Gly238–His258.

It belongs to the UppP family.

It localises to the cell inner membrane. The catalysed reaction is di-trans,octa-cis-undecaprenyl diphosphate + H2O = di-trans,octa-cis-undecaprenyl phosphate + phosphate + H(+). In terms of biological role, catalyzes the dephosphorylation of undecaprenyl diphosphate (UPP). Confers resistance to bacitracin. The polypeptide is Undecaprenyl-diphosphatase (Bdellovibrio bacteriovorus (strain ATCC 15356 / DSM 50701 / NCIMB 9529 / HD100)).